Consider the following 535-residue polypeptide: Alpha-1,3-mannosyl-glycoprotein 4-beta-N-acetylglucosaminyltransferase A (535 aa).

The Cytoplasmic portion of the chain corresponds to 1–4 (MRLR). The helical; Signal-anchor for type II membrane protein transmembrane segment at 5–27 (NGTVATALAFITSFLTLSWYTTW) threads the bilayer. Residues 28-63 (QNGKEKLIAYQREFLALKERLRIAEHRISQRSSELN) are a coiled coil. At 28–535 (QNGKEKLIAY…NEIHIKKATK (508 aa)) the chain is on the lumenal side. N-linked (GlcNAc...) asparagine glycans are attached at residues Asn77 and Asn458. Ser474 is modified (phosphoserine).

Belongs to the glycosyltransferase 54 family. A divalent metal cation serves as cofactor. N-glycosylated.

Its subcellular location is the golgi apparatus membrane. It is found in the secreted. The catalysed reaction is N(4)-{beta-D-GlcNAc-(1-&gt;2)-alpha-D-Man-(1-&gt;3)-[beta-D-GlcNAc-(1-&gt;2)-alpha-D-Man-(1-&gt;6)]-beta-D-Man-(1-&gt;4)-beta-D-GlcNAc-(1-&gt;4)-beta-D-GlcNAc}-L-asparaginyl-[protein] + UDP-N-acetyl-alpha-D-glucosamine = N(4)-{beta-D-GlcNAc-(1-&gt;2)-[beta-D-GlcNAc-(1-&gt;4)]-alpha-D-Man-(1-&gt;3)-[beta-D-GlcNAc-(1-&gt;2)-alpha-D-Man-(1-&gt;6)]-beta-D-Man-(1-&gt;4)-beta-D-GlcNAc-(1-&gt;4)-beta-D-GlcNAc}-L-asparaginyl-[protein] + UDP + H(+). It catalyses the reaction an N(4)-{beta-D-GlcNAc-(1-&gt;2)-alpha-D-Man-(1-&gt;3)-[alpha-D-Man-(1-&gt;6)]-beta-D-Man-(1-&gt;4)-beta-D-GlcNAc-(1-&gt;4)-beta-D-GlcNAc}-L-asparaginyl-[protein] + UDP-N-acetyl-alpha-D-glucosamine = an N(4)-{beta-D-GlcNAc-(1-&gt;2)-[beta-D-GlcNAc-(1-&gt;4)]-alpha-D-Man-(1-&gt;3)-[alpha-D-Man-(1-&gt;6)]-beta-D-Man-(1-&gt;4)-beta-D-GlcNAc-(1-&gt;4)-beta-D-GlcNAc}-L-asparaginyl-[protein] + UDP + H(+). The enzyme catalyses an N(4)-{beta-D-GlcNAc-(1-&gt;2)-alpha-D-Man-(1-&gt;3)-[beta-D-GlcNAc-(1-&gt;2)-[beta-D-GlcNAc-(1-&gt;6)]-alpha-D-Man-(1-&gt;6)]-beta-D-Man-(1-&gt;4)-beta-D-GlcNAc-(1-&gt;4)-beta-D-GlcNAc}-L-asparaginyl-[protein] + UDP-N-acetyl-alpha-D-glucosamine = an N(4)-{beta-D-GlcNAc-(1-&gt;2)-[beta-D-GlcNAc-(1-&gt;4)]-alpha-D-Man-(1-&gt;3)-[beta-D-GlcNAc-(1-&gt;2)-[beta-D-GlcNAc-(1-&gt;6)]-alpha-D-Man-(1-&gt;6)]-beta-D-Man-(1-&gt;4)-beta-D-GlcNAc-(1-&gt;4)-beta-D-GlcNAc}-L-asparaginyl-[protein] + UDP + H(+). It carries out the reaction an N(4)-{beta-D-GlcNAc-(1-&gt;2)-alpha-D-Man-(1-&gt;3)-[beta-D-GlcNAc-(1-&gt;2)-alpha-D-Man-(1-&gt;6)]-beta-D-Man-(1-&gt;4)-beta-D-GlcNAc-(1-&gt;4)-[alpha-L-Fuc-(1-&gt;6)]-beta-D-GlcNAc}-L-asparaginyl-[protein] + UDP-N-acetyl-alpha-D-glucosamine = N(4)-{beta-D-GlcNAc-(1-&gt;2)-[beta-D-GlcNAc-(1-&gt;4)]-alpha-D-Man-(1-&gt;3)-[beta-D-GlcNAc-(1-&gt;2)-alpha-D-Man-(1-&gt;6)]-beta-D-Man-(1-&gt;4)-beta-D-GlcNAc-(1-&gt;4)-[alpha-L-Fuc-(1-&gt;6)]-beta-D-GlcNAc}-asparaginyl-[protein] + UDP + H(+). The catalysed reaction is an N(4)-{beta-D-GlcNAc-(1-&gt;2)-alpha-D-Man-(1-&gt;3)-[beta-D-Gal-(1-&gt;4)-beta-D-GlcNAc-(1-&gt;2)-alpha-D-Man-(1-&gt;6)]-beta-D-Man-(1-&gt;4)-beta-D-GlcNAc-(1-&gt;4)-beta-D-GlcNAc}-L-asparaginyl-[protein] + UDP-N-acetyl-alpha-D-glucosamine = an N(4)-{beta-D-GlcNAc-(1-&gt;2)-[beta-D-GlcNAc-(1-&gt;4)]-alpha-D-Man-(1-&gt;3)-[beta-D-Gal-(1-&gt;4)-beta-D-GlcNAc-(1-&gt;2)-alpha-D-Man-(1-&gt;6)]-beta-D-Man-(1-&gt;4)-beta-D-GlcNAc-(1-&gt;4)-beta-D-GlcNAc}-L-asparaginyl-[protein] + UDP + H(+). It catalyses the reaction N(4)-{beta-D-GlcNAc-(1-&gt;2)-alpha-D-Man-(1-&gt;3)-[alpha-D-Man-(1-&gt;3)-{alpha-D-Man-(1-&gt;6)}-alpha-D-Man-(1-&gt;6)]-beta-D-Man-(1-&gt;4)-beta-D-GlcNAc-(1-&gt;4)-beta-D-GlcNAc}-asparaginyl-[protein] + UDP-N-acetyl-alpha-D-glucosamine = N(4)-{beta-D-GlcNAc-(1-&gt;2)-[beta-D-GlcNAc-(1-&gt;4)]-alpha-D-Man-(1-&gt;3)-[alpha-D-Man-(1-&gt;3)-{alpha-D-Man-(1-&gt;6)}-alpha-D-Man-(1-&gt;6)]-beta-D-Man-(1-&gt;4)-beta-D-GlcNAc-(1-&gt;4)-beta-D-GlcNAc}-asparaginyl-[protein] + UDP + H(+). The enzyme catalyses N(4)-{beta-D-GlcNAc-(1-&gt;2)-alpha-D-Man-(1-&gt;3)-beta-D-Man-(1-&gt;4)-beta-D-GlcNAc-(1-&gt;4)-beta-D-GlcNAc}-asparaginyl-[protein] + UDP-N-acetyl-alpha-D-glucosamine = N(4)-{beta-D-GlcNAc-(1-&gt;2)-[beta-D-GlcNAc-(1-&gt;4)]-alpha-D-Man-(1-&gt;3)-beta-D-Man-(1-&gt;4)-beta-D-GlcNAc-(1-&gt;4)-beta-D-GlcNAc}-asparaginyl-[protein] + UDP + H(+). The protein operates within protein modification; protein glycosylation. Its activity is regulated as follows. Inhibited by UDP. Its function is as follows. Glycosyltransferase that catalyze the transfer of GlcNAc from UDP-GlcNAc to the GlcNAcbeta1-2Manalpha1-3 arm of the core structure of N-linked glycans through a beta1-4 linkage and participates in the production of tri- and tetra-antennary N-linked sugar chains. Involved in glucose transport by mediating SLC2A2/GLUT2 glycosylation, thereby controlling cell-surface expression of SLC2A2 in pancreatic beta cells. This is Alpha-1,3-mannosyl-glycoprotein 4-beta-N-acetylglucosaminyltransferase A from Macaca fascicularis (Crab-eating macaque).